A 440-amino-acid chain; its full sequence is Thymidine phosphorylase (440 aa).

Belongs to the thymidine/pyrimidine-nucleoside phosphorylase family. In terms of assembly, homodimer.

The catalysed reaction is thymidine + phosphate = 2-deoxy-alpha-D-ribose 1-phosphate + thymine. It functions in the pathway pyrimidine metabolism; dTMP biosynthesis via salvage pathway; dTMP from thymine: step 1/2. In terms of biological role, the enzymes which catalyze the reversible phosphorolysis of pyrimidine nucleosides are involved in the degradation of these compounds and in their utilization as carbon and energy sources, or in the rescue of pyrimidine bases for nucleotide synthesis. The protein is Thymidine phosphorylase of Klebsiella pneumoniae (strain 342).